Reading from the N-terminus, the 291-residue chain is Kidney mitochondrial carrier protein 1 (291 aa).

Ser2 is subject to N-acetylserine. Solcar repeat units follow at residues 7-96 (KPFV…LKRL), 104-189 (ETLP…TKKH), and 198-289 (DTVY…LKKL). Helical transmembrane passes span 9-26 (FVYG…TFPI), 71-89 (GIAP…KIGT), 105-124 (TLPI…STIA), 164-183 (GVSL…LPVY), 204-224 (FLSS…VDVV), and 264-283 (GFWP…FVTY).

The protein belongs to the mitochondrial carrier (TC 2.A.29) family. Interacts with VDAC1.

The protein resides in the mitochondrion inner membrane. The enzyme catalyses sulfite(in) + sulfate(out) = sulfite(out) + sulfate(in). It catalyses the reaction thiosulfate(in) + sulfate(out) = thiosulfate(out) + sulfate(in). It carries out the reaction sulfate(out) + phosphate(in) = sulfate(in) + phosphate(out). The catalysed reaction is oxalate(in) + sulfate(out) = oxalate(out) + sulfate(in). The enzyme catalyses malonate(in) + sulfate(out) = malonate(out) + sulfate(in). It catalyses the reaction maleate(in) + sulfate(out) = maleate(out) + sulfate(in). It carries out the reaction (S)-malate(in) + sulfate(out) = (S)-malate(out) + sulfate(in). The catalysed reaction is (3S)-citramalate(in) + sulfate(out) = (3S)-citramalate(out) + sulfate(in). The enzyme catalyses (3R)-citramalate(in) + sulfate(out) = (3R)-citramalate(out) + sulfate(in). It catalyses the reaction sulfate(out) + succinate(in) = sulfate(in) + succinate(out). It carries out the reaction (S,S)-tartrate(in) + sulfate(out) = (S,S)-tartrate(out) + sulfate(in). The catalysed reaction is (2R,3R)-tartrate(in) + sulfate(out) = (2R,3R)-tartrate(out) + sulfate(in). The enzyme catalyses D-aspartate(in) + sulfate(out) = D-aspartate(out) + sulfate(in). It catalyses the reaction L-aspartate(in) + sulfate(out) = L-aspartate(out) + sulfate(in). It carries out the reaction sulfate(in) = sulfate(out). The catalysed reaction is phosphate(in) = phosphate(out). The enzyme catalyses (S)-malate(out) = (S)-malate(in). Increased activity at pH 6.0. sulfate/sulfate exchange activity is inhibited strongly by pyridoxal 5'-phosphate, bathophenanthroline and the organic mercurials mersalyl, p-chloromercuribenzoate and HgCl2. Functionally, antiporter that transports inorganic anions (sulfate, sulfite, thiosulfate and phosphate) and, to a lesser extent, a variety of dicarboxylates (e.g. malonate, malate and citramalate) and, even more so, aspartate. The sulfate/sulfate exchange is much higher than the phosphate/phosphate and malate/malate exchanges. The transport affinities is higher for sulfate and thiosulfate than for any other substrate. May catalyze the export of sulfite and thiosulfate (the hydrogen sulfide degradation products) from the mitochondria, thereby modulating the level of the hydrogen sulfide. Also may mediate a very low unidirectional transport of sulfate, phosphate and (S)-malate. This chain is Kidney mitochondrial carrier protein 1, found in Homo sapiens (Human).